The primary structure comprises 227 residues: ATP synthase F(0) complex subunit a (227 aa).

6 consecutive transmembrane segments (helical) span residues 14–34 (LLGH…FPSP), 69–89 (WALM…LGLL), 98–118 (QLSM…LTGL), 139–159 (IPAL…ALGV), 167–187 (AGHL…PILP), and 190–210 (SILT…VAMI).

It belongs to the ATPase A chain family. Component of the ATP synthase complex composed at least of ATP5F1A/subunit alpha, ATP5F1B/subunit beta, ATP5MC1/subunit c (homooctomer), MT-ATP6/subunit a, MT-ATP8/subunit 8, ATP5ME/subunit e, ATP5MF/subunit f, ATP5MG/subunit g, ATP5MK/subunit k, ATP5MJ/subunit j, ATP5F1C/subunit gamma, ATP5F1D/subunit delta, ATP5F1E/subunit epsilon, ATP5PF/subunit F6, ATP5PB/subunit b, ATP5PD/subunit d, ATP5PO/subunit OSCP. ATP synthase complex consists of a soluble F(1) head domain (subunits alpha(3) and beta(3)) - the catalytic core - and a membrane F(0) domain - the membrane proton channel (subunits c, a, 8, e, f, g, k and j). These two domains are linked by a central stalk (subunits gamma, delta, and epsilon) rotating inside the F1 region and a stationary peripheral stalk (subunits F6, b, d, and OSCP). Interacts with DNAJC30; interaction is direct.

The protein localises to the mitochondrion inner membrane. The enzyme catalyses H(+)(in) = H(+)(out). Its function is as follows. Subunit a, of the mitochondrial membrane ATP synthase complex (F(1)F(0) ATP synthase or Complex V) that produces ATP from ADP in the presence of a proton gradient across the membrane which is generated by electron transport complexes of the respiratory chain. ATP synthase complex consist of a soluble F(1) head domain - the catalytic core - and a membrane F(1) domain - the membrane proton channel. These two domains are linked by a central stalk rotating inside the F(1) region and a stationary peripheral stalk. During catalysis, ATP synthesis in the catalytic domain of F(1) is coupled via a rotary mechanism of the central stalk subunits to proton translocation. With the subunit c (ATP5MC1), forms the proton-conducting channel in the F(0) domain, that contains two crucial half-channels (inlet and outlet) that facilitate proton movement from the mitochondrial intermembrane space (IMS) into the matrix. Protons are taken up via the inlet half-channel and released through the outlet half-channel, following a Grotthuss mechanism. The protein is ATP synthase F(0) complex subunit a of Anas platyrhynchos (Mallard).